The following is a 724-amino-acid chain: Actin-related protein 5 (724 aa).

3 disordered regions span residues 358 to 391, 412 to 450, and 467 to 488; these read QSLRKARGEPKNEPAEYEENPDSLNNEKYPLMNV, TTAEGRLRARQKRNEEELEKEKRNQLEEERRRENPESYL, and KKRLKTNGSSNGNNKSGGIGRG. Residues 414 to 446 show a composition bias toward basic and acidic residues; it reads AEGRLRARQKRNEEELEKEKRNQLEEERRRENP. S542 bears the Phosphoserine mark.

This sequence belongs to the actin family. ARP5 subfamily. Component of the INO80 chromatin-remodeling complex. Interacts with EEN. Expressed ubiquitously in seedlings, roots, leaves, buds, flowers and siliques.

It is found in the nucleus. The protein resides in the nucleoplasm. It localises to the cytoplasm. Probable subunit of a chromatin-remodeling complex. Involved in DNA repair. Required for multicellular development of all organs. This Arabidopsis thaliana (Mouse-ear cress) protein is Actin-related protein 5.